The following is a 377-amino-acid chain: Opsin-1 (377 aa).

Residues 1-58 lie on the Extracellular side of the membrane; it reads MDPGPGLAALQAWAAKSPAYGAANQTVVDKVPPDMMHMIDPHWYQFPPMNPLWHALLG. N-linked (GlcNAc...) asparagine glycosylation occurs at N24. The helical transmembrane segment at 59–79 threads the bilayer; it reads FTIGVLGFVSISGNGMVIYIF. At 80–92 the chain is on the cytoplasmic side; the sequence is MSTKSLKTPSNLL. Residues 93-113 traverse the membrane as a helical segment; sequence VVNLAFSDFLMMCAMSPAMVV. Residues 114-129 lie on the Extracellular side of the membrane; sequence NCYYETWVWGPFACEL. An intrachain disulfide couples C127 to C204. A helical transmembrane segment spans residues 130 to 150; sequence YACAGSLFGCASIWTMTMIAF. The Cytoplasmic portion of the chain corresponds to 151 to 169; sequence DRYNVIVKGIAAKPMTSNG. Residues 170-190 form a helical membrane-spanning segment; it reads ALLRILGIWVFSLAWTLLPFF. Over 191-220 the chain is Extracellular; that stretch reads GWNRYVPEGNMTACGTDYLSKSWVSRSYIL. Residue N200 is glycosylated (N-linked (GlcNAc...) asparagine). The chain crosses the membrane as a helical span at residues 221 to 241; the sequence is IYSVFVYFLPLLLIIYSYFFI. At 242 to 280 the chain is on the cytoplasmic side; the sequence is VQAVAAHEKAMREQAKKMNVASLRSSEAANTSAECKLAK. A helical transmembrane segment spans residues 281 to 301; it reads VALMTISLWFMAWTPYLVINY. At 302–312 the chain is on the extracellular side; sequence TGVFESAPISP. A helical transmembrane segment spans residues 313–335; that stretch reads LATIWGSLFAKANAVYNPIVYGI. The Cytoplasmic segment spans residues 336–377; it reads SHPKYQAALYAKFPSLQCQSAPEDAGSVASGTTAVSEEKPAA. The disordered stretch occupies residues 357-377; sequence PEDAGSVASGTTAVSEEKPAA.

It belongs to the G-protein coupled receptor 1 family. Opsin subfamily. As to expression, in the retina, expression is abundant and uniform in the anterior-posterior and oblique cells of the retinulae, with some expression in the proximal cells. There is no expression in the dorsal rim retinulae (at protein level).

Its subcellular location is the cell projection. The protein resides in the rhabdomere membrane. Functionally, visual pigments are the light-absorbing molecules that mediate vision. They consist of an apoprotein, opsin, covalently linked to cis-retinal. May play a role in photoperiodic photoreception. This chain is Opsin-1 (OP1), found in Manduca sexta (Tobacco hawkmoth).